Reading from the N-terminus, the 92-residue chain is Neuropeptide ShK-like2 (92 aa).

Residues 1–23 (MTTIRCVLFAVLLFAYCALLIKA) form the signal peptide. The propeptide occupies 24–51 (RSIDAEAEKTWQEEETKTVAEKSPLKKR). 3 cysteine pairs are disulfide-bonded: Cys53–Cys92, Cys61–Cys85, and Cys70–Cys89.

In terms of tissue distribution, transcripts are first expressed mostly in the endoderm (with rare ectodermal cells) in the late planulae. They are mostly expressed in endodermal ganglion cells in the body column and tentacles in primary polyps, as well as in a small number of ectodermal sensory neurons in tentacles and body wall. They are not expressed in nematocytes. As to expression, transcripts are predominantly expressed in ectodermal sensory neurons in early and late planulae. They are expressed in endodermal ganglion cells in the body column and tentacles in primary polyps, as well as in a small number of ectodermal neurons in pharynx. They are not expressed in nematocytes.

Its function is as follows. In vivo, this neuropeptide induces contraction paralysis followed by death (within 2 hours) on 4 zebrafish larvae on the 15 tested. Also induces body contraction in Nematostella 11-dpf polyps. This Nematostella vectensis (Starlet sea anemone) protein is Neuropeptide ShK-like2.